A 264-amino-acid polypeptide reads, in one-letter code: Undecaprenyl-diphosphatase (264 aa).

Helical transmembrane passes span 34–54 (LLNL…MGSI), 75–95 (LLYL…LYII), 104–124 (YDPS…GLYI), 137–157 (LSLK…LPGV), 180–200 (YSYL…ILFS), 207–227 (VISL…FIIG), and 243–263 (IYII…LTIL).

Belongs to the UppP family.

The protein localises to the cell membrane. The catalysed reaction is di-trans,octa-cis-undecaprenyl diphosphate + H2O = di-trans,octa-cis-undecaprenyl phosphate + phosphate + H(+). Its function is as follows. Catalyzes the dephosphorylation of undecaprenyl diphosphate (UPP). This Sulfurisphaera tokodaii (strain DSM 16993 / JCM 10545 / NBRC 100140 / 7) (Sulfolobus tokodaii) protein is Undecaprenyl-diphosphatase.